A 460-amino-acid chain; its full sequence is Endoglucanase 2 (460 aa).

Positions 1-32 (MIKGSSLKRIKSLVMMAIFSVSIITTAIVSSA) are cleaved as a signal peptide. The active-site Proton donor is E99. D155 (nucleophile) is an active-site residue. Residues 400 to 460 (QQGLKGDVNN…FAQLKVKLLN (61 aa)) form the Dockerin domain.

The protein belongs to the glycosyl hydrolase 8 (cellulase D) family.

The enzyme catalyses Endohydrolysis of (1-&gt;4)-beta-D-glucosidic linkages in cellulose, lichenin and cereal beta-D-glucans.. In Ruminiclostridium josui (Clostridium josui), this protein is Endoglucanase 2 (celB).